A 69-amino-acid polypeptide reads, in one-letter code: DNA-directed RNA polymerase subunit omega (69 aa).

It belongs to the RNA polymerase subunit omega family. As to quaternary structure, the RNAP catalytic core consists of 2 alpha, 1 beta, 1 beta' and 1 omega subunit. When a sigma factor is associated with the core the holoenzyme is formed, which can initiate transcription.

It carries out the reaction RNA(n) + a ribonucleoside 5'-triphosphate = RNA(n+1) + diphosphate. In terms of biological role, promotes RNA polymerase assembly. Latches the N- and C-terminal regions of the beta' subunit thereby facilitating its interaction with the beta and alpha subunits. The sequence is that of DNA-directed RNA polymerase subunit omega from Geobacter metallireducens (strain ATCC 53774 / DSM 7210 / GS-15).